The primary structure comprises 1049 residues: Exotoxin PaxA (1049 aa).

Transmembrane regions (helical) follow at residues 246–266 (GLGL…FTLA), 311–331 (GPAA…LSFL), 375–395 (ITTI…ASAG), and 397–417 (LVGA…SGIL). Hemolysin-type calcium-binding repeat units follow at residues 744–761 (KGSK…DDLL), 762–779 (NGND…NDEL), 780–797 (RGDN…NDKL), 798–815 (FGGN…DDEL), 826–843 (RGGK…SDFL), and 844–861 (DGGE…NDFY).

This sequence belongs to the RTX prokaryotic toxin (TC 1.C.11) family.

The protein resides in the secreted. It is found in the host cell membrane. PaxA is associated with abortion cases in swine and septicemia in young piglets. Shows cohemolytic activity with the sphingomyelinase of S.aureus but is devoid of direct hemolytic activity. This is Exotoxin PaxA (paxA) from Pasteurella aerogenes.